The sequence spans 1058 residues: SIT4-associating protein SAP185 (1058 aa).

Residue lysine 20 forms a Glycyl lysine isopeptide (Lys-Gly) (interchain with G-Cter in ubiquitin) linkage. Disordered stretches follow at residues threonine 34–glutamate 71, serine 135–glutamate 202, asparagine 513–aspartate 556, cysteine 818–glutamine 862, threonine 873–glutamate 892, and glutamate 934–aspartate 992. A compositionally biased stretch (polar residues) spans aspartate 42–phenylalanine 55. 2 stretches are compositionally biased toward basic and acidic residues: residues serine 135–lysine 146 and glutamate 153–glycine 175. Positions glutamate 176 to serine 189 are enriched in acidic residues. Residues glutamate 190 to glutamate 202 are compositionally biased toward basic and acidic residues. Composition is skewed to acidic residues over residues glutamate 528–asparagine 546 and glutamate 820–proline 837. Over residues glutamine 838–glutamate 861 the composition is skewed to basic and acidic residues. Residues glutamate 934–phenylalanine 963 are compositionally biased toward polar residues. Over residues phenylalanine 967 to tyrosine 991 the composition is skewed to basic and acidic residues.

It belongs to the SAPS family. Post-translationally, hyperphosphorylated in the absence of SIT4.

Functionally, associates with the SIT4 phosphatase in a cell cycle dependent manner. May be directly or indirectly involved in SIT4-dependent functions in budding and in normal G1 cyclin expression. In Saccharomyces cerevisiae (strain ATCC 204508 / S288c) (Baker's yeast), this protein is SIT4-associating protein SAP185 (SAP185).